Consider the following 455-residue polypeptide: Protein chibby homolog 2 (455 aa).

8 positions are modified to phosphoserine: serine 41, serine 86, serine 89, serine 97, serine 124, serine 144, serine 148, and serine 150. Residues 160–197 (KRLAKECLLQENKTLREENRALREENRMLRKENKILQV) adopt a coiled-coil conformation. Phosphoserine is present on residues serine 211 and serine 225. The stretch at 240–266 (GRENSTLQLLREENRALQQLLEQRKAY) forms a coiled coil. The tract at residues 267–318 (WAQPDEKAASTEEIKPISSPHEEPHGLLPDPGPGLPSPFEEPKGLPAPPDDS) is disordered. Over residues 270–291 (PDEKAASTEEIKPISSPHEEPH) the composition is skewed to basic and acidic residues. Residues serine 276 and serine 332 each carry the phosphoserine modification. A coiled-coil region spans residues 350–421 (SQSLELLREM…KLKLQQKLVI (72 aa)).

This sequence belongs to the chibby family. SPERT subfamily. In terms of assembly, homodimer. Binds to NEK1.

The protein is Protein chibby homolog 2 (CBY2) of Bos taurus (Bovine).